We begin with the raw amino-acid sequence, 132 residues long: S-protein homolog 8 (132 aa).

The first 20 residues, methionine 1–glycine 20, serve as a signal peptide directing secretion.

The protein belongs to the plant self-incompatibility (S1) protein family. In terms of tissue distribution, mostly expressed in seedlings, stems, leaves and floral tissues, and, to a lower extent, in roots.

Its subcellular location is the secreted. This Arabidopsis thaliana (Mouse-ear cress) protein is S-protein homolog 8.